A 433-amino-acid chain; its full sequence is Enolase (433 aa).

Residue Q167 participates in (2R)-2-phosphoglycerate binding. The active-site Proton donor is E209. Mg(2+) is bound by residues D246, E291, and D318. (2R)-2-phosphoglycerate-binding residues include K343, R372, S373, and K394. K343 serves as the catalytic Proton acceptor.

Belongs to the enolase family. In terms of assembly, component of the RNA degradosome, a multiprotein complex involved in RNA processing and mRNA degradation. The cofactor is Mg(2+).

The protein resides in the cytoplasm. It localises to the secreted. Its subcellular location is the cell surface. The enzyme catalyses (2R)-2-phosphoglycerate = phosphoenolpyruvate + H2O. The protein operates within carbohydrate degradation; glycolysis; pyruvate from D-glyceraldehyde 3-phosphate: step 4/5. Catalyzes the reversible conversion of 2-phosphoglycerate (2-PG) into phosphoenolpyruvate (PEP). It is essential for the degradation of carbohydrates via glycolysis. The protein is Enolase of Shewanella frigidimarina (strain NCIMB 400).